Here is a 202-residue protein sequence, read N- to C-terminus: LexA repressor (202 aa).

A DNA-binding region (H-T-H motif) is located at residues 28 to 48 (RAEIAQRLGFRSPNAAEEHLK). Active-site for autocatalytic cleavage activity residues include serine 119 and lysine 156.

Belongs to the peptidase S24 family. In terms of assembly, homodimer.

It catalyses the reaction Hydrolysis of Ala-|-Gly bond in repressor LexA.. In terms of biological role, represses a number of genes involved in the response to DNA damage (SOS response), including recA and lexA. Binds to the 16 bp palindromic sequence 5'-CTGTATATATATACAG-3'. In the presence of single-stranded DNA, RecA interacts with LexA causing an autocatalytic cleavage which disrupts the DNA-binding part of LexA, leading to derepression of the SOS regulon and eventually DNA repair. The protein is LexA repressor of Klebsiella pneumoniae subsp. pneumoniae (strain ATCC 700721 / MGH 78578).